Reading from the N-terminus, the 689-residue chain is SH3 domain-binding protein 1 (689 aa).

Over residues 1 to 11 (MMKRQLHRMRQ) the composition is skewed to basic residues. The segment at 1 to 24 (MMKRQLHRMRQLAHTGSSGRTPET) is disordered. The interaction with CGNL1 stretch occupies residues 1 to 275 (MMKRQLHRMR…TAAPFSRVYG (275 aa)). Positions 17–262 (SSGRTPETAE…RDNHSQADSS (246 aa)) constitute a BAR domain. 2 positions are modified to phosphoserine: S241 and S262. One can recognise a Rho-GAP domain in the interval 276 to 469 (VSLRTHLQDL…VLIQNADTLF (194 aa)). Residues 470–689 (PGDINFSVSG…RPRGLISETD (220 aa)) form an interaction with CD2AP region. Positions 507–689 (TAATPTPTPA…RPRGLISETD (183 aa)) are disordered. Phosphoserine is present on residues S539 and S545. The segment covering 565–575 (PARPTMPPPQP) has biased composition (pro residues). Residues 576–594 (SSSRSSPPALSLPAGSVSP) are compositionally biased toward low complexity. S586 carries the phosphoserine modification. A Phosphothreonine modification is found at T596. An SH3-binding motif is present at residues 611-620 (APTVPPPLPP). Residues 613–625 (TVPPPLPPAPPQP) are compositionally biased toward pro residues. S641 is modified (phosphoserine). Residues 670 to 680 (PPTPVLPPQPR) are compositionally biased toward pro residues.

Interacts with RAC1. Interacts with the exocyst via EXOC4 and EXOC8; required for the localization of both SH3BP1 and the exocyst to the leading edge of migrating cells. Interacts with CD2AP and CGNL1; probably part of a complex at cell junctions. Interacts with CAPZA1; recruits CAPZA1 to forming cell junctions. May interact with AFDN. Interacts with PLXND1; they dissociate upon SEMA3E binding to PLXND1 allowing SH3BP1 to transduce downstream signal through RAC1 inactivation. Interacts with ABL1, GRB2 and SRC (via SH3 domain).

Its subcellular location is the cell projection. The protein localises to the cell junction. It is found in the tight junction. The protein resides in the adherens junction. It localises to the phagocytic cup. Its subcellular location is the nucleus. The protein localises to the cytoplasm. It is found in the cytosol. Its function is as follows. GTPase activating protein/GAP which specifically converts GTP-bound Rho-type GTPases including RAC1 and CDC42 in their inactive GDP-bound form. By specifically inactivating RAC1 at the leading edge of migrating cells, it regulates the spatiotemporal organization of cell protrusions which is important for proper cell migration. Also negatively regulates CDC42 in the process of actin remodeling and the formation of epithelial cell junctions. Through its GAP activity toward RAC1 and/or CDC42 plays a specific role in phagocytosis of large particles. Specifically recruited by a PI3 kinase/PI3K-dependent mechanism to sites of large particles engagement, inactivates RAC1 and/or CDC42 allowing the reorganization of the underlying actin cytoskeleton required for engulfment. It also plays a role in angiogenesis and the process of repulsive guidance as part of a semaphorin-plexin signaling pathway. Following the binding of PLXND1 to extracellular SEMA3E it dissociates from PLXND1 and inactivates RAC1, inducing the intracellular reorganization of the actin cytoskeleton and the collapse of cells. The chain is SH3 domain-binding protein 1 from Rattus norvegicus (Rat).